Here is a 218-residue protein sequence, read N- to C-terminus: Superoxide dismutase [Mn] 1 (218 aa).

Positions 43, 98, 180, and 184 each coordinate Mn(2+).

The protein belongs to the iron/manganese superoxide dismutase family. Homodimer. It depends on Mn(2+) as a cofactor.

The catalysed reaction is 2 superoxide + 2 H(+) = H2O2 + O2. Destroys superoxide anion radicals which are normally produced within the cells and which are toxic to biological systems. The sequence is that of Superoxide dismutase [Mn] 1 (sodA1) from Bacillus cereus (strain ATCC 14579 / DSM 31 / CCUG 7414 / JCM 2152 / NBRC 15305 / NCIMB 9373 / NCTC 2599 / NRRL B-3711).